The primary structure comprises 124 residues: Holo-[acyl-carrier-protein] synthase (124 aa).

Mg(2+)-binding residues include Asp8 and Glu60.

Belongs to the P-Pant transferase superfamily. AcpS family. The cofactor is Mg(2+).

It localises to the cytoplasm. The enzyme catalyses apo-[ACP] + CoA = holo-[ACP] + adenosine 3',5'-bisphosphate + H(+). Functionally, transfers the 4'-phosphopantetheine moiety from coenzyme A to a Ser of acyl-carrier-protein. The protein is Holo-[acyl-carrier-protein] synthase of Wolbachia pipientis subsp. Culex pipiens (strain wPip).